The chain runs to 269 residues: Phosphonoacetaldehyde hydrolase (269 aa).

Catalysis depends on Asp-10, which acts as the Nucleophile. 2 residues coordinate Mg(2+): Asp-10 and Ala-12. The active-site Schiff-base intermediate with substrate is Lys-52. Asp-186 provides a ligand contact to Mg(2+).

It belongs to the HAD-like hydrolase superfamily. PhnX family. Homodimer. Requires Mg(2+) as cofactor.

The catalysed reaction is phosphonoacetaldehyde + H2O = acetaldehyde + phosphate + H(+). Involved in phosphonate degradation. The protein is Phosphonoacetaldehyde hydrolase of Klebsiella pneumoniae subsp. pneumoniae (strain ATCC 700721 / MGH 78578).